Consider the following 652-residue polypeptide: Carboxypeptidase Z (652 aa).

The first 18 residues, 1-18 (MPPPLPLLLLTVLVVAAA), serve as a signal peptide directing secretion. Residues 27-160 (NPAGECHRPP…TREDEGCYDP (134 aa)) form the FZ domain. 5 disulfide bridges follow: Cys-43/Cys-109, Cys-51/Cys-102, Cys-93/Cys-129, Cys-118/Cys-157, and Cys-122/Cys-146. A Peptidase M14 domain is found at 186–502 (SHHSYAQMVR…ESLLNFVETV (317 aa)). Zn(2+) contacts are provided by His-248 and Glu-251. Residue Asn-281 is glycosylated (N-linked (GlcNAc...) asparagine). His-380 contributes to the Zn(2+) binding site. Glu-472 (proton donor/acceptor) is an active-site residue. Positions 595–629 (LRRTGPHDPLGGASSLGEATEPDPLRARRQPSADG) are disordered.

This sequence belongs to the peptidase M14 family. It depends on Zn(2+) as a cofactor. In placenta, it is present within invasive trophoblasts and in the surrounding extracellular space. Also present in amnion cells, but is not readily apparent in the extracellular matrix of this cell type. Present in normal pituitary gland and neoplastic pituitary gland (especially POMC-, GH- and PRL-producing adenomas) (at protein level). Widely expressed.

It is found in the secreted. Its subcellular location is the extracellular space. It localises to the extracellular matrix. Inhibited by 2-mercaptomethyl-3-guanidinoethylthiopropanoic acid (MGTA) and guanidinoethylmercaptosuccinic acid (GEMSA). Inhibited by chelating agents such as EDTA and EGTA. In terms of biological role, cleaves substrates with C-terminal arginine residues. Probably modulates the Wnt signaling pathway, by cleaving some undefined protein. May play a role in cleavage during prohormone processing. The chain is Carboxypeptidase Z (CPZ) from Homo sapiens (Human).